Consider the following 87-residue polypeptide: U3-theraphotoxin-Hhn1g (87 aa).

The N-terminal stretch at 1–24 (MVNMKASMFLTFAGLVLLFVVCFA) is a signal peptide. A propeptide spanning residues 25 to 52 (SESEEKEFPKEMLSSIFAVDNDFKQEER) is cleaved from the precursor. Cystine bridges form between cysteine 54/cysteine 67, cysteine 61/cysteine 72, and cysteine 66/cysteine 79.

The protein belongs to the neurotoxin 10 (Hwtx-1) family. 51 (Hntx-8) subfamily. Hntx-8 sub-subfamily. As to expression, expressed by the venom gland.

Its subcellular location is the secreted. Its function is as follows. Ion channel inhibitor. This Cyriopagopus hainanus (Chinese bird spider) protein is U3-theraphotoxin-Hhn1g.